A 172-amino-acid chain; its full sequence is ATP synthase subunit b, chloroplastic (172 aa).

A helical membrane pass occupies residues 15–37 (ILATNLINLSAVLGVLIFFGKGV).

This sequence belongs to the ATPase B chain family. In terms of assembly, F-type ATPases have 2 components, F(1) - the catalytic core - and F(0) - the membrane proton channel. F(1) has five subunits: alpha(3), beta(3), gamma(1), delta(1), epsilon(1). F(0) has four main subunits: a(1), b(1), b'(1) and c(10-14). The alpha and beta chains form an alternating ring which encloses part of the gamma chain. F(1) is attached to F(0) by a central stalk formed by the gamma and epsilon chains, while a peripheral stalk is formed by the delta, b and b' chains.

It is found in the plastid. The protein resides in the chloroplast thylakoid membrane. Its function is as follows. F(1)F(0) ATP synthase produces ATP from ADP in the presence of a proton or sodium gradient. F-type ATPases consist of two structural domains, F(1) containing the extramembraneous catalytic core and F(0) containing the membrane proton channel, linked together by a central stalk and a peripheral stalk. During catalysis, ATP synthesis in the catalytic domain of F(1) is coupled via a rotary mechanism of the central stalk subunits to proton translocation. Component of the F(0) channel, it forms part of the peripheral stalk, linking F(1) to F(0). The chain is ATP synthase subunit b, chloroplastic from Pisum sativum (Garden pea).